Here is a 145-residue protein sequence, read N- to C-terminus: Large ribosomal subunit protein bL19 (145 aa).

Residues 112–130 (GKSARIKERRPAKAVEKTS) are compositionally biased toward basic and acidic residues. The interval 112 to 145 (GKSARIKERRPAKAVEKTSKPASAKKPAAKANKK) is disordered.

This sequence belongs to the bacterial ribosomal protein bL19 family.

In terms of biological role, this protein is located at the 30S-50S ribosomal subunit interface and may play a role in the structure and function of the aminoacyl-tRNA binding site. The protein is Large ribosomal subunit protein bL19 of Malacoplasma penetrans (strain HF-2) (Mycoplasma penetrans).